The sequence spans 252 residues: tRNA (guanine-N(1)-)-methyltransferase (252 aa).

S-adenosyl-L-methionine-binding positions include G116 and 135–140; that span reads LGDYVL.

This sequence belongs to the RNA methyltransferase TrmD family. Homodimer.

It localises to the cytoplasm. The catalysed reaction is guanosine(37) in tRNA + S-adenosyl-L-methionine = N(1)-methylguanosine(37) in tRNA + S-adenosyl-L-homocysteine + H(+). Its function is as follows. Specifically methylates guanosine-37 in various tRNAs. The sequence is that of tRNA (guanine-N(1)-)-methyltransferase from Limosilactobacillus reuteri (strain DSM 20016) (Lactobacillus reuteri).